Consider the following 406-residue polypeptide: Pygopus homolog 2 (406 aa).

2 disordered regions span residues 1–73 (MAAS…DHLV) and 106–323 (VQGG…PQPP). Ala2 is modified (N-acetylalanine). Ser40 carries the post-translational modification Phosphoserine. Residues 41–47 (PEKKRRK) carry the Nuclear localization signal motif. Pro residues-rich tracts occupy residues 131–141 (RQPPPFPPNPM) and 149–158 (PQGPGYPPPG). Positions 164–179 (SQPFNQPLGQNFSPPS) are enriched in polar residues. A compositionally biased stretch (pro residues) spans 236–252 (SLPPNTSPFPGPDPGFP). Polar residues predominate over residues 285-296 (NGNQPSFPPNSS). Thr302 bears the Phosphothreonine mark. The segment at 327 to 385 (VYPCGACRSEVNDDQDAILCEASCQKWFHRECTGMTESAYGLLTTEASAVWACDLCLKT) adopts a PHD-type zinc-finger fold.

In terms of assembly, binds to BCL9 via the PHD-type zinc finger motif, and thereby becomes part of the nuclear beta-catenin/TCF complex.

The protein localises to the nucleus. Functionally, involved in signal transduction through the Wnt pathway. The sequence is that of Pygopus homolog 2 (PYGO2) from Homo sapiens (Human).